The primary structure comprises 350 residues: Histidinol-phosphate aminotransferase (350 aa).

Lysine 209 is subject to N6-(pyridoxal phosphate)lysine.

It belongs to the class-II pyridoxal-phosphate-dependent aminotransferase family. Histidinol-phosphate aminotransferase subfamily. In terms of assembly, homodimer. Pyridoxal 5'-phosphate serves as cofactor.

It carries out the reaction L-histidinol phosphate + 2-oxoglutarate = 3-(imidazol-4-yl)-2-oxopropyl phosphate + L-glutamate. Its pathway is amino-acid biosynthesis; L-histidine biosynthesis; L-histidine from 5-phospho-alpha-D-ribose 1-diphosphate: step 7/9. The polypeptide is Histidinol-phosphate aminotransferase (Citrifermentans bemidjiense (strain ATCC BAA-1014 / DSM 16622 / JCM 12645 / Bem) (Geobacter bemidjiensis)).